A 232-amino-acid chain; its full sequence is MNKTEQDQLKKEAATKAAKMVEPNSVLGVGTGSTVAFFIDALGERKEREGFSLKHIVTTSNRSKKQLEGLGFKVDELADIDQADLTVDGADRVDDNLDGIKGGGGALTLEKNVAINSKKIIWIVDESKLVHHLSGFPLPVEVLPVSAEQNFKRFEAEGLKPQWRLNDEGKRYVTHYGNYIIDLAADPTPVPHGLADYLDHTVGVVEHGLFLDMCDEVIIAHSDGTIEDKKRK.

Residues 31 to 34, 88 to 91, and 101 to 104 each bind substrate; these read TGST, DGAD, and KGGG. Glu110 acts as the Proton acceptor in catalysis. Lys128 is a binding site for substrate.

Belongs to the ribose 5-phosphate isomerase family. In terms of assembly, homodimer.

It catalyses the reaction aldehydo-D-ribose 5-phosphate = D-ribulose 5-phosphate. The protein operates within carbohydrate degradation; pentose phosphate pathway; D-ribose 5-phosphate from D-ribulose 5-phosphate (non-oxidative stage): step 1/1. In terms of biological role, catalyzes the reversible conversion of ribose-5-phosphate to ribulose 5-phosphate. This is Ribose-5-phosphate isomerase A from Lactobacillus johnsonii (strain CNCM I-12250 / La1 / NCC 533).